A 156-amino-acid polypeptide reads, in one-letter code: Ribosome maturation factor RimP (156 aa).

It belongs to the RimP family.

The protein resides in the cytoplasm. Functionally, required for maturation of 30S ribosomal subunits. This chain is Ribosome maturation factor RimP, found in Exiguobacterium sp. (strain ATCC BAA-1283 / AT1b).